A 79-amino-acid polypeptide reads, in one-letter code: RNA-binding protein Hfq (79 aa).

In terms of domain architecture, Sm spans 10–70 (DVFLNTVRKQ…ISTIMPGQPV (61 aa)).

This sequence belongs to the Hfq family. As to quaternary structure, homohexamer.

Functionally, RNA chaperone that binds small regulatory RNA (sRNAs) and mRNAs to facilitate mRNA translational regulation in response to envelope stress, environmental stress and changes in metabolite concentrations. Also binds with high specificity to tRNAs. The polypeptide is RNA-binding protein Hfq (Bartonella tribocorum (strain CIP 105476 / IBS 506)).